A 287-amino-acid polypeptide reads, in one-letter code: uncharacterized protein (287 aa).

The region spanning 115–287 is the ATP-grasp domain; sequence PQNFDREWNP…NLAIELLKAI (173 aa). Residues Lys145 and 178–188 contribute to the ATP site; that span reads QKYITCSKGES. Mg(2+) contacts are provided by Asp248, Glu261, and Asn263. Residues Asp248, Glu261, and Asn263 each coordinate Mn(2+).

This sequence belongs to the RimK family.

This is an uncharacterized protein from Mycoplasma genitalium (strain ATCC 33530 / DSM 19775 / NCTC 10195 / G37) (Mycoplasmoides genitalium).